A 367-amino-acid chain; its full sequence is UDP-N-acetylglucosamine--N-acetylmuramyl-(pentapeptide) pyrophosphoryl-undecaprenol N-acetylglucosamine transferase (367 aa).

UDP-N-acetyl-alpha-D-glucosamine is bound by residues Thr15–Gly17, Asn127, Arg163, Ser191, Ile249, and Gln294.

This sequence belongs to the glycosyltransferase 28 family. MurG subfamily.

Its subcellular location is the cell inner membrane. It catalyses the reaction di-trans,octa-cis-undecaprenyl diphospho-N-acetyl-alpha-D-muramoyl-L-alanyl-D-glutamyl-meso-2,6-diaminopimeloyl-D-alanyl-D-alanine + UDP-N-acetyl-alpha-D-glucosamine = di-trans,octa-cis-undecaprenyl diphospho-[N-acetyl-alpha-D-glucosaminyl-(1-&gt;4)]-N-acetyl-alpha-D-muramoyl-L-alanyl-D-glutamyl-meso-2,6-diaminopimeloyl-D-alanyl-D-alanine + UDP + H(+). It participates in cell wall biogenesis; peptidoglycan biosynthesis. Functionally, cell wall formation. Catalyzes the transfer of a GlcNAc subunit on undecaprenyl-pyrophosphoryl-MurNAc-pentapeptide (lipid intermediate I) to form undecaprenyl-pyrophosphoryl-MurNAc-(pentapeptide)GlcNAc (lipid intermediate II). The chain is UDP-N-acetylglucosamine--N-acetylmuramyl-(pentapeptide) pyrophosphoryl-undecaprenol N-acetylglucosamine transferase from Burkholderia lata (strain ATCC 17760 / DSM 23089 / LMG 22485 / NCIMB 9086 / R18194 / 383).